Reading from the N-terminus, the 478-residue chain is UDP-N-acetylmuramate--L-alanine ligase (478 aa).

126–132 provides a ligand contact to ATP; it reads GTHGKTT.

This sequence belongs to the MurCDEF family.

The protein resides in the cytoplasm. It carries out the reaction UDP-N-acetyl-alpha-D-muramate + L-alanine + ATP = UDP-N-acetyl-alpha-D-muramoyl-L-alanine + ADP + phosphate + H(+). It participates in cell wall biogenesis; peptidoglycan biosynthesis. Cell wall formation. The protein is UDP-N-acetylmuramate--L-alanine ligase of Synechococcus sp. (strain JA-2-3B'a(2-13)) (Cyanobacteria bacterium Yellowstone B-Prime).